The sequence spans 148 residues: Large ribosomal subunit protein bL9 (148 aa).

It belongs to the bacterial ribosomal protein bL9 family.

In terms of biological role, binds to the 23S rRNA. This chain is Large ribosomal subunit protein bL9, found in Frankia casuarinae (strain DSM 45818 / CECT 9043 / HFP020203 / CcI3).